The following is a 604-amino-acid chain: Elongation factor 4 (604 aa).

The region spanning 7–189 (KNIRNFCIIA…QIVTKIPAPS (183 aa)) is the tr-type G domain. GTP is bound by residues 19–24 (DHGKST) and 136–139 (NKID).

This sequence belongs to the TRAFAC class translation factor GTPase superfamily. Classic translation factor GTPase family. LepA subfamily.

The protein localises to the cell membrane. The enzyme catalyses GTP + H2O = GDP + phosphate + H(+). Functionally, required for accurate and efficient protein synthesis under certain stress conditions. May act as a fidelity factor of the translation reaction, by catalyzing a one-codon backward translocation of tRNAs on improperly translocated ribosomes. Back-translocation proceeds from a post-translocation (POST) complex to a pre-translocation (PRE) complex, thus giving elongation factor G a second chance to translocate the tRNAs correctly. Binds to ribosomes in a GTP-dependent manner. The protein is Elongation factor 4 of Lachnospira eligens (strain ATCC 27750 / DSM 3376 / VPI C15-48 / C15-B4) (Eubacterium eligens).